The sequence spans 395 residues: Protein phosphatase PP2A regulatory subunit A (395 aa).

HEAT repeat units lie at residues 44 to 81 (DCLA…AVGP), 83 to 120 (STKT…ILSP), 122 to 159 (LAIQ…VLGK), 161 to 198 (ATIE…VIGI), 200 to 237 (LLSQ…QLGV), 239 to 276 (FFDD…EEFG), 279 to 316 (WAMQ…VLGS), and 318 to 355 (ITST…IVDE).

Belongs to the phosphatase 2A regulatory subunit A family. In terms of assembly, PP2A exists in several trimeric forms, all of which consist of a core composed of a catalytic subunit associated with a 65 kDa regulatory subunit (PR65) (subunit A). The core complex associates with a third, variable subunit (subunit B), which confers distinct properties to the holoenzyme.

Its function is as follows. The PR65 subunit of protein phosphatase 2A serves as a scaffolding molecule to coordinate the assembly of the catalytic subunit and a variable regulatory B subunit. This chain is Protein phosphatase PP2A regulatory subunit A, found in Pisum sativum (Garden pea).